The primary structure comprises 90 residues: Bombyxin B-3 (90 aa).

Positions 1-20 (MMKTTIMFMLVVVISLTYSS) are cleaved as a signal peptide. 3 disulfides stabilise this stretch: Cys-30–Cys-76, Cys-42–Cys-89, and Cys-75–Cys-80. Residues 49 to 67 (SGAQYAPYFWTRQYLGSRG) constitute a propeptide, c peptide like.

It belongs to the insulin family. As to quaternary structure, heterodimer of a B chain and an A chain linked by two disulfide bonds.

It localises to the secreted. Brain peptide responsible for activation of prothoracic glands to produce ecdysone in insects. In Bombyx mori (Silk moth), this protein is Bombyxin B-3 (BBXB3).